We begin with the raw amino-acid sequence, 1302 residues long: Ubiquitin conjugation factor E4 B (1302 aa).

Position 1 is an N-acetylmethionine (M1). The disordered stretch occupies residues 1–155 (MEELSADEIR…EPSSGPEVSE (155 aa)). Residues 16 to 33 (RLAGGQTSQPTTPLTSPQ) show a composition bias toward low complexity. S23 and S31 each carry phosphoserine. Over residues 51–64 (QSLGLNVHNMTPAT) the composition is skewed to polar residues. Residues 76-99 (SQSSEGVSSLSSSPSNSLETQSQS) are compositionally biased toward low complexity. S84, S88, S90, S101, S103, S105, and S124 each carry phosphoserine. A compositionally biased stretch (basic and acidic residues) spans 134–147 (NDRREKRSLSDKEP). S238 is subject to Phosphoserine. The segment covering 299-327 (AASQLAVPSTPLSPHSAASGTAAGSQPSS) has biased composition (polar residues). The disordered stretch occupies residues 299-406 (AASQLAVPST…SPSLGASGGA (108 aa)). Low complexity predominate over residues 340-374 (ASSGVSILSSSPSPPALASSPQAVPASSSRQRPSS). Phosphoserine is present on S383. The span at 384–400 (PSATSRRPSSLRISPSL) shows a compositional bias: low complexity. Phosphoserine occurs at positions 803 and 969. Residues 1057-1077 (NKEQWDQLPRDQQQARQSQLA) form a disordered region. The segment covering 1066–1077 (RDQQQARQSQLA) has biased composition (low complexity). The 74-residue stretch at 1227-1300 (DAPDEFRDPL…QAWMREKQNS (74 aa)) folds into the U-box domain. S1265 carries the phosphoserine modification.

The protein belongs to the ubiquitin conjugation factor E4 family. In terms of assembly, interacts with VCP/p97. Interacts with STUB1/CHIP and UNC45B. Post-translationally, proteolytically cleaved by caspases during apoptosis. Cleaved efficiently at Asp-123 by caspase-6 and granzyme B. Cleaved with approximately 10-fold less efficiency at Asp-109 by caspase-3 and caspase-7. As to expression, expressed in differentiated myotubes (at protein level). Highest expression in ovary, testis, heart and skeletal muscle. Expression is low in colon, thymus and peripheral blood leukocytes. Almost undetectable in lung and spleen.

The protein resides in the cytoplasm. It localises to the nucleus. It catalyses the reaction S-ubiquitinyl-[E2 ubiquitin-conjugating enzyme]-L-cysteine + [acceptor protein]-L-lysine = [E2 ubiquitin-conjugating enzyme]-L-cysteine + N(6)-ubiquitinyl-[acceptor protein]-L-lysine.. Its pathway is protein modification; protein ubiquitination. Ubiquitin-protein ligase that probably functions as an E3 ligase in conjunction with specific E1 and E2 ligases. May also function as an E4 ligase mediating the assembly of polyubiquitin chains on substrates ubiquitinated by another E3 ubiquitin ligase. May regulate myosin assembly in striated muscles together with STUB1 and VCP/p97 by targeting myosin chaperone UNC45B for proteasomal degradation. This chain is Ubiquitin conjugation factor E4 B, found in Homo sapiens (Human).